A 255-amino-acid polypeptide reads, in one-letter code: Na(+)-translocating NADH-quinone reductase subunit C (255 aa).

A helical membrane pass occupies residues 11-31; the sequence is LGVVVGLSLVCSIIVSTAAVG. FMN phosphoryl threonine is present on Thr-223.

Belongs to the NqrC family. As to quaternary structure, composed of six subunits; NqrA, NqrB, NqrC, NqrD, NqrE and NqrF. The cofactor is FMN.

Its subcellular location is the cell inner membrane. It carries out the reaction a ubiquinone + n Na(+)(in) + NADH + H(+) = a ubiquinol + n Na(+)(out) + NAD(+). NQR complex catalyzes the reduction of ubiquinone-1 to ubiquinol by two successive reactions, coupled with the transport of Na(+) ions from the cytoplasm to the periplasm. NqrA to NqrE are probably involved in the second step, the conversion of ubisemiquinone to ubiquinol. The chain is Na(+)-translocating NADH-quinone reductase subunit C from Vibrio vulnificus (strain CMCP6).